The following is a 309-amino-acid chain: Chronophin (309 aa).

Catalysis depends on D25, which acts as the Nucleophile. 2 residues coordinate Mg(2+): D25 and D27. The active-site Proton donor is D27. Residues 58 to 60, H178, and K209 each bind substrate; that span reads SNN. D234 is a binding site for Mg(2+).

This sequence belongs to the HAD-like hydrolase superfamily. Homodimer. It depends on Mg(2+) as a cofactor.

It localises to the cytoplasm. The protein resides in the cytosol. It is found in the cytoskeleton. The protein localises to the cell projection. Its subcellular location is the ruffle membrane. It localises to the lamellipodium membrane. The protein resides in the cell membrane. The enzyme catalyses pyridoxal 5'-phosphate + H2O = pyridoxal + phosphate. It carries out the reaction pyridoxine 5'-phosphate + H2O = pyridoxine + phosphate. It catalyses the reaction pyridoxamine + phosphate = pyridoxamine 5'-phosphate + H2O. The catalysed reaction is O-phospho-L-seryl-[protein] + H2O = L-seryl-[protein] + phosphate. Its function is as follows. Functions as a pyridoxal phosphate (PLP) phosphatase, which also catalyzes the dephosphorylation of pyridoxine 5'-phosphate (PNP) and pyridoxamine 5'-phosphate (PMP), with order of substrate preference PLP &gt; PNP &gt; PMP and therefore plays a role in vitamin B6 metabolism. Also functions as a protein serine phosphatase that specifically dephosphorylates 'Ser-3' in proteins of the actin-depolymerizing factor (ADF)/cofilin family like CFL1 and DSTN. Thereby, regulates cofilin-dependent actin cytoskeleton reorganization, being required for normal progress through mitosis and normal cytokinesis. Does not dephosphorylate phosphothreonines in LIMK1. Does not dephosphorylate peptides containing phosphotyrosine. The chain is Chronophin from Rattus norvegicus (Rat).